The chain runs to 539 residues: GMP synthase [glutamine-hydrolyzing] (539 aa).

The 199-residue stretch at 4 to 202 (KILILDFGSQ…VLGICRAKAD (199 aa)) folds into the Glutamine amidotransferase type-1 domain. Residue Cys-81 is the Nucleophile of the active site. Catalysis depends on residues His-176 and Glu-178. A GMPS ATP-PPase domain is found at 203–395 (WVMKDHIEEA…LGLPPEMVYR (193 aa)). ATP is bound at residue 230-236 (SGGVDSS).

In terms of assembly, homodimer.

The catalysed reaction is XMP + L-glutamine + ATP + H2O = GMP + L-glutamate + AMP + diphosphate + 2 H(+). The protein operates within purine metabolism; GMP biosynthesis; GMP from XMP (L-Gln route): step 1/1. In terms of biological role, catalyzes the synthesis of GMP from XMP. The sequence is that of GMP synthase [glutamine-hydrolyzing] from Cupriavidus pinatubonensis (strain JMP 134 / LMG 1197) (Cupriavidus necator (strain JMP 134)).